Reading from the N-terminus, the 188-residue chain is dCTP deaminase (188 aa).

DCTP is bound by residues 111–116 (KSTYAR), 135–137 (TLE), Gln156, Tyr170, and Gln180. Glu137 functions as the Proton donor/acceptor in the catalytic mechanism.

This sequence belongs to the dCTP deaminase family. In terms of assembly, homotrimer.

It carries out the reaction dCTP + H2O + H(+) = dUTP + NH4(+). It functions in the pathway pyrimidine metabolism; dUMP biosynthesis; dUMP from dCTP (dUTP route): step 1/2. Its function is as follows. Catalyzes the deamination of dCTP to dUTP. In Paracidovorax citrulli (strain AAC00-1) (Acidovorax citrulli), this protein is dCTP deaminase.